The sequence spans 556 residues: Phenylalanine--tRNA ligase beta subunit (556 aa).

The 77-residue stretch at 269 to 345 (MEPEEVVYDV…MGYGYERIEP (77 aa)) folds into the B5 domain. The Mg(2+) site is built by Asp-323, Asp-329, Glu-332, and Glu-333.

Belongs to the phenylalanyl-tRNA synthetase beta subunit family. Type 2 subfamily. In terms of assembly, tetramer of two alpha and two beta subunits. Requires Mg(2+) as cofactor.

The protein resides in the cytoplasm. The catalysed reaction is tRNA(Phe) + L-phenylalanine + ATP = L-phenylalanyl-tRNA(Phe) + AMP + diphosphate + H(+). This chain is Phenylalanine--tRNA ligase beta subunit, found in Thermofilum pendens (strain DSM 2475 / Hrk 5).